Consider the following 190-residue polypeptide: Peptidyl-tRNA hydrolase (190 aa).

Tyrosine 14 lines the tRNA pocket. The Proton acceptor role is filled by histidine 19. TRNA contacts are provided by tyrosine 64, asparagine 66, and asparagine 112.

It belongs to the PTH family. As to quaternary structure, monomer.

It is found in the cytoplasm. It catalyses the reaction an N-acyl-L-alpha-aminoacyl-tRNA + H2O = an N-acyl-L-amino acid + a tRNA + H(+). Its function is as follows. Hydrolyzes ribosome-free peptidyl-tRNAs (with 1 or more amino acids incorporated), which drop off the ribosome during protein synthesis, or as a result of ribosome stalling. Catalyzes the release of premature peptidyl moieties from peptidyl-tRNA molecules trapped in stalled 50S ribosomal subunits, and thus maintains levels of free tRNAs and 50S ribosomes. The sequence is that of Peptidyl-tRNA hydrolase from Chlorobium phaeovibrioides (strain DSM 265 / 1930) (Prosthecochloris vibrioformis (strain DSM 265)).